Reading from the N-terminus, the 129-residue chain is Large ribosomal subunit protein bL12 (129 aa).

This sequence belongs to the bacterial ribosomal protein bL12 family. Homodimer. Part of the ribosomal stalk of the 50S ribosomal subunit. Forms a multimeric L10(L12)X complex, where L10 forms an elongated spine to which 2 to 4 L12 dimers bind in a sequential fashion. Binds GTP-bound translation factors.

Forms part of the ribosomal stalk which helps the ribosome interact with GTP-bound translation factors. Is thus essential for accurate translation. The protein is Large ribosomal subunit protein bL12 of Pelotomaculum thermopropionicum (strain DSM 13744 / JCM 10971 / SI).